Here is a 264-residue protein sequence, read N- to C-terminus: Thymidylate synthase (264 aa).

Arg-21 provides a ligand contact to dUMP. Residue His-51 coordinates (6R)-5,10-methylene-5,6,7,8-tetrahydrofolate. 126–127 is a binding site for dUMP; it reads RR. Cys-146 serves as the catalytic Nucleophile. DUMP-binding positions include 166–169, Asn-177, and 207–209; these read RSCD and HLY. (6R)-5,10-methylene-5,6,7,8-tetrahydrofolate is bound at residue Asp-169. Ala-263 serves as a coordination point for (6R)-5,10-methylene-5,6,7,8-tetrahydrofolate.

Belongs to the thymidylate synthase family. Bacterial-type ThyA subfamily. As to quaternary structure, homodimer.

The protein resides in the cytoplasm. It carries out the reaction dUMP + (6R)-5,10-methylene-5,6,7,8-tetrahydrofolate = 7,8-dihydrofolate + dTMP. Its pathway is pyrimidine metabolism; dTTP biosynthesis. Catalyzes the reductive methylation of 2'-deoxyuridine-5'-monophosphate (dUMP) to 2'-deoxythymidine-5'-monophosphate (dTMP) while utilizing 5,10-methylenetetrahydrofolate (mTHF) as the methyl donor and reductant in the reaction, yielding dihydrofolate (DHF) as a by-product. This enzymatic reaction provides an intracellular de novo source of dTMP, an essential precursor for DNA biosynthesis. In Serratia proteamaculans (strain 568), this protein is Thymidylate synthase.